The following is an 885-amino-acid chain: Alanine--tRNA ligase (885 aa).

Positions 564, 568, 676, and 680 each coordinate Zn(2+).

The protein belongs to the class-II aminoacyl-tRNA synthetase family. Zn(2+) serves as cofactor.

It localises to the cytoplasm. It carries out the reaction tRNA(Ala) + L-alanine + ATP = L-alanyl-tRNA(Ala) + AMP + diphosphate. Functionally, catalyzes the attachment of alanine to tRNA(Ala) in a two-step reaction: alanine is first activated by ATP to form Ala-AMP and then transferred to the acceptor end of tRNA(Ala). Also edits incorrectly charged Ser-tRNA(Ala) and Gly-tRNA(Ala) via its editing domain. The sequence is that of Alanine--tRNA ligase from Brucella abortus (strain 2308).